Here is a 450-residue protein sequence, read N- to C-terminus: UDP-N-acetylmuramoylalanine--D-glutamate ligase (450 aa).

An ATP-binding site is contributed by 119-125 (GSNGKTT).

This sequence belongs to the MurCDEF family.

It is found in the cytoplasm. It carries out the reaction UDP-N-acetyl-alpha-D-muramoyl-L-alanine + D-glutamate + ATP = UDP-N-acetyl-alpha-D-muramoyl-L-alanyl-D-glutamate + ADP + phosphate + H(+). Its pathway is cell wall biogenesis; peptidoglycan biosynthesis. Cell wall formation. Catalyzes the addition of glutamate to the nucleotide precursor UDP-N-acetylmuramoyl-L-alanine (UMA). This is UDP-N-acetylmuramoylalanine--D-glutamate ligase from Streptococcus pneumoniae (strain ATCC BAA-255 / R6).